A 461-amino-acid polypeptide reads, in one-letter code: D-phenylhydantoinase (461 aa).

Residues histidine 59, histidine 61, and lysine 151 each coordinate a divalent metal cation. The residue at position 151 (lysine 151) is an N6-carboxylysine. Tyrosine 156 contributes to the substrate binding site. A divalent metal cation contacts are provided by histidine 182 and histidine 239. A substrate-binding site is contributed by serine 286. Aspartate 313 contacts a divalent metal cation. Asparagine 335 is a substrate binding site.

Belongs to the metallo-dependent hydrolases superfamily. Hydantoinase/dihydropyrimidinase family. Homotetramer. The cofactor is a divalent metal cation. Carboxylation allows a single lysine to coordinate two divalent metal cations.

It catalyses the reaction D-5-phenylhydantoin + H2O = N-carbamoyl-D-phenylglycine + H(+). In terms of biological role, catalyzes the stereospecific hydrolysis of the cyclic amide bond of D-hydantoin derivatives with an aromatic side chains at the 5'-position. Has no activity on dihydropyrimidines. The physiological function is unknown. This chain is D-phenylhydantoinase, found in Escherichia coli (strain SE11).